The sequence spans 1669 residues: Collagen alpha-1(IV) chain (1669 aa).

Positions 1-27 (MGPRLGVWLLLLLAALLLHEESSRAAA) are cleaved as a signal peptide. The propeptide at 28–172 (KGGCAGSGCG…LGHIPGTLLK (145 aa)) is N-terminal propeptide (7S domain). The tract at residues 50–1445 (ERGLPGLQGV…PPGTPSVDHG (1396 aa)) is disordered. A triple-helical region region spans residues 173 to 1440 (GERGYPGQPG…PGSMGPPGTP (1268 aa)). Over residues 196-214 (VGPPGFTGPPGPPGPPGPP) the composition is skewed to pro residues. 3-hydroxyproline is present on residues P204, P207, and P210. Basic and acidic residues-rich tracts occupy residues 254 to 263 (TAMRGEKGQK) and 289 to 298 (PGKDGEKGEK). The segment covering 347–356 (GYPGGPGAKG) has biased composition (gly residues). Positions 357 to 366 (ETGPKGFPGI) are enriched in low complexity. The span at 367–376 (PGQPGPPGFP) shows a compositional bias: pro residues. Residues 396 to 412 (PGLPGVSLPGPSGRDGL) are compositionally biased toward low complexity. 2 stretches are compositionally biased toward pro residues: residues 413–424 (PGPPGPPGPPGQ) and 436–448 (PGPPGDQGPPGIP). The segment covering 485-494 (PGEIGFPGQP) has biased composition (low complexity). Basic and acidic residues-rich tracts occupy residues 497 to 508 (KGDRGLPGRDGL) and 535 to 545 (FDIRLKGDKGD). The segment covering 586–595 (GPPGGVGFPG) has biased composition (gly residues). 3-hydroxyproline is present on residues P587 and P602. P603 bears the 4-hydroxyproline mark. 3-hydroxyproline is present on P605. A 4-hydroxyproline mark is found at P606, P623, P626, P629, and P632. P647 carries the 3-hydroxyproline modification. Composition is skewed to gly residues over residues 758 to 767 (GNVGGPGIPG) and 797 to 817 (GVPGIGPPGAMGPPGGQGPPG). Over residues 847-871 (SQGLPGLTGQSGLPGLPGQQGTPGQ) the composition is skewed to low complexity. Basic and acidic residues predominate over residues 937–955 (SMDKVDMGSMKGEKGDQGE). Residues 1011–1020 (GSAGGMGLPG) show a composition bias toward gly residues. 3 stretches are compositionally biased toward low complexity: residues 1030–1040 (IPGPQGIPGLP), 1101–1114 (SPGSVGYPGSPGLP), and 1193–1212 (FPGLSGSPGIPGSKGEQGFM). The residue at position 1214 (P1214) is a 3-hydroxyproline. Over residues 1247–1258 (PGRPGPMGPPGL) the composition is skewed to pro residues. A compositionally biased stretch (gly residues) spans 1290–1299 (GMPGIGGSPG). Positions 1413-1428 (FGPPGPRGFPGPPGPD) are enriched in pro residues. P1424 carries the post-translational modification 3-hydroxyproline. One can recognise a Collagen IV NC1 domain in the interval 1445 to 1669 (GFLVTRHSQT…SRCQVCMRRT (225 aa)). 6 cysteine pairs are disulfide-bonded: C1460-C1551, C1493-C1548, C1505-C1511, C1570-C1665, C1604-C1662, and C1616-C1622. Residue M1533 forms an S-Lysyl-methionine sulfilimine (Met-Lys) (interchain with K-1651) linkage. K1651 participates in a covalent cross-link: S-Lysyl-methionine sulfilimine (Lys-Met) (interchain with M-1533).

This sequence belongs to the type IV collagen family. As to quaternary structure, there are six type IV collagen isoforms, alpha 1(IV)-alpha 6(IV), each of which can form a triple helix structure with 2 other chains to generate type IV collagen network. Interacts with EFEMP2. In terms of processing, lysines at the third position of the tripeptide repeating unit (G-X-Y) are hydroxylated in all cases. The modified lysines can be O-glycosylated. Contains 4-hydroxyproline. Prolines at the third position of the tripeptide repeating unit (G-X-Y) are hydroxylated in some or all of the chains. Post-translationally, contains 3-hydroxyproline. This modification occurs on the first proline residue in the sequence motif Gly-Pro-Hyp, where Hyp is 4-hydroxyproline. In terms of processing, type IV collagens contain numerous cysteine residues which are involved in inter- and intramolecular disulfide bonding. 12 of these, located in the NC1 domain, are conserved in all known type IV collagens. The trimeric structure of the NC1 domains is stabilized by covalent bonds (sulfilimine cross-links) between Lys and Met residues. These cross-links are important for the mechanical stability of the basement membrane. Sulfilimine cross-link is catalyzed by PXDN. Post-translationally, proteolytic processing produces the C-terminal NC1 peptide, arresten.

Its subcellular location is the secreted. It is found in the extracellular space. The protein localises to the extracellular matrix. It localises to the basement membrane. Its function is as follows. Type IV collagen is the major structural component of glomerular basement membranes (GBM), forming a 'chicken-wire' meshwork together with laminins, proteoglycans and entactin/nidogen. In terms of biological role, arresten, comprising the C-terminal NC1 domain, inhibits angiogenesis and tumor formation. The C-terminal half is found to possess the anti-angiogenic activity. Specifically inhibits endothelial cell proliferation, migration and tube formation. The protein is Collagen alpha-1(IV) chain of Bos taurus (Bovine).